Reading from the N-terminus, the 363-residue chain is Peptide chain release factor 1 (363 aa).

Gln237 carries the N5-methylglutamine modification. A compositionally biased stretch (basic and acidic residues) spans 284-296 (EDEKRRSAEESTR). Residues 284-305 (EDEKRRSAEESTRRSLVASGDR) form a disordered region.

This sequence belongs to the prokaryotic/mitochondrial release factor family. In terms of processing, methylated by PrmC. Methylation increases the termination efficiency of RF1.

The protein resides in the cytoplasm. Functionally, peptide chain release factor 1 directs the termination of translation in response to the peptide chain termination codons UAG and UAA. The polypeptide is Peptide chain release factor 1 (Shewanella baltica (strain OS195)).